A 76-amino-acid polypeptide reads, in one-letter code: Antimicrobial peptide lumbricin-1 (76 aa).

Residues 1 to 14 constitute a propeptide, removed in mature form; sequence MSLCISDYLYLTLT.

Its function is as follows. Displays antimicrobial activity against the Gram-positive bacteria B.subtilis ATCC 62037, S.aureus ATCC 15752 and S.mutans ATCC 25175, the Gram-negative bacteria E.coli ATCC 27325, P.putida ATCC 17426 and Serratia sp. ATCC 21074, and the fungi C.albicans ATCC 10231, C.neoformans ATCC 34881 and S.cerevisiae ATCC 44774. Does not possess hemolytic activity. The polypeptide is Antimicrobial peptide lumbricin-1 (Lumbricus rubellus (Humus earthworm)).